We begin with the raw amino-acid sequence, 434 residues long: Histidinol dehydrogenase (434 aa).

Residues Ser-242, Gln-264, and His-267 each coordinate substrate. Gln-264 and His-267 together coordinate Zn(2+). Catalysis depends on proton acceptor residues Glu-332 and His-333. Residues His-333, Asp-366, Glu-420, and His-425 each contribute to the substrate site. A Zn(2+)-binding site is contributed by Asp-366. His-425 is a binding site for Zn(2+).

The protein belongs to the histidinol dehydrogenase family. It depends on Zn(2+) as a cofactor.

The enzyme catalyses L-histidinol + 2 NAD(+) + H2O = L-histidine + 2 NADH + 3 H(+). The protein operates within amino-acid biosynthesis; L-histidine biosynthesis; L-histidine from 5-phospho-alpha-D-ribose 1-diphosphate: step 9/9. Catalyzes the sequential NAD-dependent oxidations of L-histidinol to L-histidinaldehyde and then to L-histidine. The sequence is that of Histidinol dehydrogenase from Oleidesulfovibrio alaskensis (strain ATCC BAA-1058 / DSM 17464 / G20) (Desulfovibrio alaskensis).